A 1350-amino-acid polypeptide reads, in one-letter code: Nidogen (1350 aa).

Residues 1 to 22 (MPTFGSKLLACLLLSSVILVSG) form the signal peptide. The NIDO domain maps to 107-260 (AFYSNVDTSF…GVWLFEVAPI (154 aa)). Residue N231 is glycosylated (N-linked (GlcNAc...) asparagine). In terms of domain architecture, EGF-like 1 spans 281 to 321 (LALSCQAHAHQCHEKAECHDKAEGYCCVCGSGFYGNGKSCL). Disulfide bonds link C285–C298, C292–C307, and C309–C320. Residues 325–550 (QPIRVTGTLT…GVTPESNACN (226 aa)) enclose the Nidogen G2 beta-barrel domain. N-linked (GlcNAc...) asparagine glycosylation is found at N423 and N480. Residues 545-583 (ESNACNDGTADCVENSVCVPYEDTYRCDCYHGFAAQLDE) form the EGF-like 2 domain. Intrachain disulfides connect C549-C562, C556-C571, C595-C608, C602-C617, and C619-C630. Positions 591–631 (DIDECATGSHVCDENAVCDNTEGGFNCYCTEGFEGNGYRCL) constitute an EGF-like 3; calcium-binding domain. N633 is a glycosylation site (N-linked (GlcNAc...) asparagine). The segment at 645 to 691 (VEGQAEPTSEPSPNPSPYPDQGQDQEREREDDQYPQPNPYPYPEEQI) is disordered. EGF-like domains are found at residues 788-829 (DLIP…YNCD), 832-874 (SDDS…FNCQ), 912-953 (PAGR…TGCT), 955-996 (KPLS…YVCI), and 997-1037 (EEQN…SLCQ). 15 disulfide bridges follow: C792/C804, C798/C815, C817/C828, C836/C849, C843/C860, C862/C873, C916/C927, C921/C938, C940/C952, C959/C971, C965/C982, C984/C995, C1001/C1014, C1008/C1023, and C1025/C1036. An N-linked (GlcNAc...) asparagine glycan is attached at N801. An N-linked (GlcNAc...) asparagine glycan is attached at N1032. 4 LDL-receptor class B repeats span residues 1084–1126 (GRVY…DVIS), 1127–1170 (RRLY…DPYR), 1171–1216 (EKLF…LENS), and 1257–1282 (DQFY…QTPI).

As to expression, expressed in the basement membrane around the follicular epithelium of the adult ovary (at protein level).

It localises to the secreted. The protein localises to the extracellular space. It is found in the extracellular matrix. The protein resides in the basement membrane. Functionally, cell adhesion glycoprotein which is widely distributed in basement membranes. Involved in cell-extracellular matrix (ECM) interactions probably by connecting the laminin and collagen IV networks. Required for permeability and mechanical stability of basement membranes, and ECM dependent neural plasticity. Not involved in assembly of the embryonic basement membrane. In Drosophila melanogaster (Fruit fly), this protein is Nidogen.